The sequence spans 203 residues: Ras-related protein Rab-13 (203 aa).

Residues Ser17, Gly18, Gly20, Lys21, Thr22, Cys23, and Thr40 each contribute to the GTP site. Thr22 is a binding site for Mg(2+). Residues 31 to 45 (DNFNNTYISTIGIDF) carry the Switch 1 motif. Position 40 (Thr40) interacts with Mg(2+). Glycyl lysine isopeptide (Lys-Gly) (interchain with G-Cter in ubiquitin) cross-links involve residues Lys46 and Lys58. Asp63 provides a ligand contact to Mg(2+). A Switch 2 motif is present at residues 63–80 (DTAGQERFKTITTAYYRG). GTP is bound by residues Gly66, Asn121, Lys122, Asp124, Ala152, and Lys153. The interval 173 to 203 (SGGRRSGNHSKPSSTDLKPSDKKNTNKCSLG) is disordered. Ser178 carries the post-translational modification Phosphoserine. Cys200 carries the post-translational modification Cysteine methyl ester. The S-geranylgeranyl cysteine moiety is linked to residue Cys200. A propeptide spans 201–203 (SLG) (removed in mature form).

The protein belongs to the small GTPase superfamily. Rab family. Interacts (GTP-bound form) with MICALL2; competes with RAB8A and is involved in tight junctions assembly. Interacts (GTP-bound form) with MICALL1. Interacts (GTP-bound form) with MICAL1, MICAL3, MICALCL, EHBP1 and EHBP1L1; ternary complexes of RAB8A, RAB13 and either MICAL1 or EHBP1L1 are possible. Interacts with PRKACA; downstream effector of RAB13 involved in tight junction assembly. Interacts with GRB2; may recruit RAB13 to the leading edge of migrating endothelial cells where it can activate RHOA. Interacts (isoprenylated form) with PDE6D; dissociates RAB13 from membranes. Interacts with BICDL2/BICDR2. Interacts with LEPROT and LEPROTL1. The cofactor is Mg(2+). Post-translationally, ubiquitinated via 'Lys-11'-linked ubiquitination on Lys-46 and Lys-58; impairing the recruitment of guanosine diphosphate (GDP) dissociation inhibitor 1/GDI1.

The protein resides in the cell membrane. The protein localises to the cytoplasmic vesicle membrane. Its subcellular location is the cell junction. It localises to the tight junction. It is found in the golgi apparatus. The protein resides in the trans-Golgi network membrane. The protein localises to the recycling endosome membrane. Its subcellular location is the cell projection. It localises to the lamellipodium. It catalyses the reaction GTP + H2O = GDP + phosphate + H(+). Its activity is regulated as follows. Regulated by guanine nucleotide exchange factors (GEFs) including DENND1C, which promote the exchange of bound GDP for free GTP. Regulated by GTPase activating proteins (GAPs) which increase the GTP hydrolysis activity. Inhibited by GDP dissociation inhibitors (GDIs). Activated in response to insulin. Functionally, the small GTPases Rab are key regulators of intracellular membrane trafficking, from the formation of transport vesicles to their fusion with membranes. Rabs cycle between an inactive GDP-bound form and an active GTP-bound form that is able to recruit to membranes different sets of downstream effectors directly responsible for vesicle formation, movement, tethering and fusion. RAB13 is involved in endocytic recycling and regulates the transport to the plasma membrane of transmembrane proteins like the tight junction protein OCLN/occludin. Thereby, it regulates the assembly and the activity of tight junctions. Moreover, it may also regulate tight junction assembly by activating the PKA signaling pathway and by reorganizing the actin cytoskeleton through the activation of the downstream effectors PRKACA and MICALL2 respectively. Through its role in tight junction assembly, may play a role in the establishment of Sertoli cell barrier. Plays also a role in angiogenesis through regulation of endothelial cells chemotaxis. Also involved in neurite outgrowth. Has also been proposed to play a role in post-Golgi membrane trafficking from the TGN to the recycling endosome. Finally, it has been involved in insulin-induced transport to the plasma membrane of the glucose transporter GLUT4 and therefore may play a role in glucose homeostasis. This Mesocricetus auratus (Golden hamster) protein is Ras-related protein Rab-13 (RAB13).